The primary structure comprises 300 residues: Glycine--tRNA ligase alpha subunit (300 aa).

The protein belongs to the class-II aminoacyl-tRNA synthetase family. In terms of assembly, tetramer of two alpha and two beta subunits.

It is found in the cytoplasm. It carries out the reaction tRNA(Gly) + glycine + ATP = glycyl-tRNA(Gly) + AMP + diphosphate. This chain is Glycine--tRNA ligase alpha subunit (glyQ), found in Buchnera aphidicola subsp. Baizongia pistaciae (strain Bp).